Here is a 90-residue protein sequence, read N- to C-terminus: Putative defensin-like protein 168 (90 aa).

The first 27 residues, 1–27 (MKYFTLFMISYIFISIFVFSHIHDVEA), serve as a signal peptide directing secretion. Cystine bridges form between Cys32–Cys90, Cys43–Cys66, Cys51–Cys84, and Cys64–Cys86.

The protein belongs to the DEFL family.

The protein localises to the secreted. In Arabidopsis thaliana (Mouse-ear cress), this protein is Putative defensin-like protein 168.